A 290-amino-acid chain; its full sequence is Protein CREG2 (290 aa).

The N-terminal stretch at 1-31 is a signal peptide; sequence MSVRRGRRPARPGTRLSWLLCCSALLSPAAG. Residues Asn-165 and Asn-166 are each glycosylated (N-linked (GlcNAc...) asparagine).

This sequence belongs to the CREG family. In terms of processing, it is not sure whether N-glycosylation is on Asn-165 and/or Asn-166. Brain specific mainly in the limbic system and faintly in the spinal cord but not in cerebellum.

The protein localises to the secreted. The sequence is that of Protein CREG2 (CREG2) from Homo sapiens (Human).